Reading from the N-terminus, the 473-residue chain is Probable DNA N(6)-methyladenine demethylase ALKBH1B (473 aa).

Position 357–359 (357–359) interacts with 2-oxoglutarate; it reads NFY. Positions 368, 391, and 449 each coordinate Fe cation. 461 to 465 contacts 2-oxoglutarate; that stretch reads RLFFR.

The protein belongs to the alkB family. It depends on Fe(2+) as a cofactor. In terms of tissue distribution, undetectable.

The enzyme catalyses an N(6)-methyl-2'-deoxyadenosine in DNA + 2-oxoglutarate + O2 = a 2'-deoxyadenosine in DNA + formaldehyde + succinate + CO2. Functionally, dioxygenase that may catalyzes DNA N(6)-methyladenine (6 mA) demethylation. Requires molecular oxygen, alpha-ketoglutarate and iron. This chain is Probable DNA N(6)-methyladenine demethylase ALKBH1B, found in Arabidopsis thaliana (Mouse-ear cress).